A 335-amino-acid chain; its full sequence is Dihydroorotate dehydrogenase (quinone) (335 aa).

FMN-binding positions include 58 to 62 (AGADK) and Thr-82. Lys-62 contributes to the substrate binding site. 107-111 (NRNGF) is a binding site for substrate. FMN contacts are provided by Asn-135 and Asn-168. Asn-168 is a binding site for substrate. The Nucleophile role is filled by Ser-171. Substrate is bound at residue Asn-173. Positions 213 and 241 each coordinate FMN. Substrate is bound at residue 242 to 243 (NT). FMN-binding positions include Gly-264, Gly-293, and 314-315 (YS).

It belongs to the dihydroorotate dehydrogenase family. Type 2 subfamily. In terms of assembly, monomer. The cofactor is FMN.

The protein localises to the cell membrane. It carries out the reaction (S)-dihydroorotate + a quinone = orotate + a quinol. It functions in the pathway pyrimidine metabolism; UMP biosynthesis via de novo pathway; orotate from (S)-dihydroorotate (quinone route): step 1/1. Its function is as follows. Catalyzes the conversion of dihydroorotate to orotate with quinone as electron acceptor. This chain is Dihydroorotate dehydrogenase (quinone), found in Haemophilus ducreyi (strain 35000HP / ATCC 700724).